Here is a 144-residue protein sequence, read N- to C-terminus: Transcriptional regulator SlyA (144 aa).

The region spanning 2 to 135 (ESPLGSDLAR…LIKLIAKLEH (134 aa)) is the HTH marR-type domain. Positions 49–72 (QIQLAKAIGIEQPSLVRTLDQLED) form a DNA-binding region, H-T-H motif.

The protein belongs to the SlyA family. As to quaternary structure, homodimer.

The protein localises to the cytoplasm. Transcription regulator that can specifically activate or repress expression of target genes. Required for virulence and survival in the macrophage environment. Probably activates the transcription of ssrB. Independently of ssrB activation, capable of stimulating the expression of virulence genes found on pathogenicity island 2 (SPI2). Probably activates expression of ispA, xseB genes, and of omp operon. This Salmonella typhimurium (strain LT2 / SGSC1412 / ATCC 700720) protein is Transcriptional regulator SlyA.